A 36-amino-acid chain; its full sequence is APSEPHHPGDQATQDQLAQYYSDLYQYITFVTRPRF.

Phenylalanine 36 is subject to Phenylalanine amide.

This sequence belongs to the NPY family.

Its subcellular location is the secreted. Its function is as follows. Hormone secreted by pancreatic cells that acts as a regulator of pancreatic and gastrointestinal functions. The protein is Pancreatic polypeptide (ppy) of Rana temporaria (European common frog).